A 459-amino-acid polypeptide reads, in one-letter code: Cysteine--tRNA ligase (459 aa).

A Zn(2+)-binding site is contributed by cysteine 29. The short motif at 31–41 (PTVYDRAHIGN) is the 'HIGH' region element. Positions 209, 234, and 238 each coordinate Zn(2+). Residues 266-270 (KMSKS) carry the 'KMSKS' region motif. Lysine 269 provides a ligand contact to ATP.

It belongs to the class-I aminoacyl-tRNA synthetase family. In terms of assembly, monomer. The cofactor is Zn(2+).

Its subcellular location is the cytoplasm. The enzyme catalyses tRNA(Cys) + L-cysteine + ATP = L-cysteinyl-tRNA(Cys) + AMP + diphosphate. The chain is Cysteine--tRNA ligase from Paramagnetospirillum magneticum (strain ATCC 700264 / AMB-1) (Magnetospirillum magneticum).